The sequence spans 532 residues: CTP synthase (532 aa).

Residues 1-269 (MNQASTRFIF…DTQILNHFNI (269 aa)) are amidoligase domain. S17 is a CTP binding site. Position 17 (S17) interacts with UTP. ATP contacts are provided by residues 18-23 (SLGKGL) and D75. Positions 75 and 143 each coordinate Mg(2+). CTP-binding positions include 150–152 (DIE), 190–195 (KTKPTQ), and K226. UTP-binding positions include 190–195 (KTKPTQ) and K226. One can recognise a Glutamine amidotransferase type-1 domain in the interval 294 to 532 (NVAIIGKYIK…FISFIKASLD (239 aa)). An L-glutamine-binding site is contributed by G355. C382 serves as the catalytic Nucleophile; for glutamine hydrolysis. L-glutamine contacts are provided by residues 383 to 386 (MGMQ), E406, and R462. Residues H509 and E511 contribute to the active site.

Belongs to the CTP synthase family. In terms of assembly, homotetramer.

The catalysed reaction is UTP + L-glutamine + ATP + H2O = CTP + L-glutamate + ADP + phosphate + 2 H(+). The enzyme catalyses L-glutamine + H2O = L-glutamate + NH4(+). It catalyses the reaction UTP + NH4(+) + ATP = CTP + ADP + phosphate + 2 H(+). It participates in pyrimidine metabolism; CTP biosynthesis via de novo pathway; CTP from UDP: step 2/2. Allosterically activated by GTP, when glutamine is the substrate; GTP has no effect on the reaction when ammonia is the substrate. The allosteric effector GTP functions by stabilizing the protein conformation that binds the tetrahedral intermediate(s) formed during glutamine hydrolysis. Inhibited by the product CTP, via allosteric rather than competitive inhibition. Functionally, catalyzes the ATP-dependent amination of UTP to CTP with either L-glutamine or ammonia as the source of nitrogen. Regulates intracellular CTP levels through interactions with the four ribonucleotide triphosphates. The polypeptide is CTP synthase (Ehrlichia chaffeensis (strain ATCC CRL-10679 / Arkansas)).